Consider the following 517-residue polypeptide: Bifunctional purine biosynthesis protein PurH (517 aa).

Residues 1 to 146 form the MGS-like domain; the sequence is MKRLALLSTS…KNFAHLTVLC (146 aa).

The protein belongs to the PurH family.

It catalyses the reaction (6R)-10-formyltetrahydrofolate + 5-amino-1-(5-phospho-beta-D-ribosyl)imidazole-4-carboxamide = 5-formamido-1-(5-phospho-D-ribosyl)imidazole-4-carboxamide + (6S)-5,6,7,8-tetrahydrofolate. It carries out the reaction IMP + H2O = 5-formamido-1-(5-phospho-D-ribosyl)imidazole-4-carboxamide. It functions in the pathway purine metabolism; IMP biosynthesis via de novo pathway; 5-formamido-1-(5-phospho-D-ribosyl)imidazole-4-carboxamide from 5-amino-1-(5-phospho-D-ribosyl)imidazole-4-carboxamide (10-formyl THF route): step 1/1. Its pathway is purine metabolism; IMP biosynthesis via de novo pathway; IMP from 5-formamido-1-(5-phospho-D-ribosyl)imidazole-4-carboxamide: step 1/1. The chain is Bifunctional purine biosynthesis protein PurH from Trichodesmium erythraeum (strain IMS101).